The chain runs to 704 residues: Glycogen [starch] synthase, liver (704 aa).

Phosphoserine is present on residues serine 8 and serine 11. Lysine 40 contributes to the UDP binding site. UDP-alpha-D-glucose-binding residues include histidine 205 and arginine 211. Residues histidine 291, glutamate 292, glutamine 294, histidine 297, and lysine 301 each contribute to the alpha-D-glucose 6-phosphate site. Arginine 331 serves as a coordination point for UDP. Arginine 331 is a binding site for UDP-alpha-D-glucose. Residue histidine 501 participates in alpha-D-glucose 6-phosphate binding. Residues glutamate 510, tryptophan 512, and glycine 513 each contribute to the UDP-alpha-D-glucose site. Threonine 515 provides a ligand contact to UDP. Alpha-D-glucose 6-phosphate is bound by residues arginine 582 and arginine 586. Positions 620 to 704 (KFHLEPTSPP…KKKLHGEYKN (85 aa)) are disordered. Phosphoserine is present on serine 627. Serine 641, serine 645, serine 649, and serine 653 each carry phosphoserine; by GSK3-alpha and GSK3-beta. Over residues 647–657 (SGSQTSSPQSS) the composition is skewed to low complexity. Serine 657 carries the phosphoserine; by CK2 modification. Residues 659 to 675 (VENEGDEDERYDEEEEA) show a composition bias toward acidic residues. Residue serine 684 is modified to Phosphoserine.

Belongs to the glycosyltransferase 3 family. Part of the glycogen synthase (GS)-glycogenin complex, a heterooctamer composed of a tetramer of GS and 2 dimers of glycogenin, where each GS protomer binds to one glycogenin subunit (via glycogenin C-terminus); the GS tetramer may dissociate from glycogenin dimers to continue glycogen polymerization on its own. May also form a heterooctamer complex with GYG1 (via GYG1 C-terminus). Post-translationally, primed phosphorylation at Ser-657 (site 5) by CSNK2A1 and CSNK2A2 is required for inhibitory phosphorylation at Ser-641 (site 3a), Ser-645 (site 3b), Ser-649 (site 3c) and Ser-653 (site 4) by GSK3A an GSK3B. Dephosphorylation at Ser-641 and Ser-645 by PP1 activates the enzyme. Phosphorylation at Ser-8 is not required for interaction with GYG1. Interaction with GYG1 does not regulate the phosphorylation at Ser-8 and Ser-641. In terms of tissue distribution, specifically expressed in liver (at protein level).

It carries out the reaction [(1-&gt;4)-alpha-D-glucosyl](n) + UDP-alpha-D-glucose = [(1-&gt;4)-alpha-D-glucosyl](n+1) + UDP + H(+). The protein operates within glycan biosynthesis; glycogen biosynthesis. Its activity is regulated as follows. Allosteric activation by glucose-6-phosphate. Phosphorylation reduces the activity towards UDP-glucose. When in the non-phosphorylated state, glycogen synthase does not require glucose-6-phosphate as an allosteric activator; when phosphorylated it does. Its function is as follows. Glycogen synthase participates in the glycogen biosynthetic process along with glycogenin and glycogen branching enzyme. Extends the primer composed of a few glucose units formed by glycogenin by adding new glucose units to it. In this context, glycogen synthase transfers the glycosyl residue from UDP-Glc to the non-reducing end of alpha-1,4-glucan. The polypeptide is Glycogen [starch] synthase, liver (Rattus norvegicus (Rat)).